Here is a 269-residue protein sequence, read N- to C-terminus: Bifunctional protein FolD (269 aa).

Residues 149 to 151 (GLG) and Val215 each bind NADP(+).

It belongs to the tetrahydrofolate dehydrogenase/cyclohydrolase family. In terms of assembly, homodimer.

It carries out the reaction (6R)-5,10-methylene-5,6,7,8-tetrahydrofolate + NADP(+) = (6R)-5,10-methenyltetrahydrofolate + NADPH. The enzyme catalyses (6R)-5,10-methenyltetrahydrofolate + H2O = (6R)-10-formyltetrahydrofolate + H(+). It participates in one-carbon metabolism; tetrahydrofolate interconversion. Its function is as follows. Catalyzes the oxidation of 5,10-methylenetetrahydrofolate to 5,10-methenyltetrahydrofolate and then the hydrolysis of 5,10-methenyltetrahydrofolate to 10-formyltetrahydrofolate. This is Bifunctional protein FolD from Mycoplasma pneumoniae (strain ATCC 29342 / M129 / Subtype 1) (Mycoplasmoides pneumoniae).